A 376-amino-acid polypeptide reads, in one-letter code: Heme chaperone HemW (376 aa).

The Radical SAM core domain maps to 1–233 (MFTLPPISLY…DKLLKKAGYK (233 aa)). An S-adenosyl-L-methionine-binding site is contributed by tyrosine 10. 3 residues coordinate [4Fe-4S] cluster: cysteine 16, cysteine 20, and cysteine 23. S-adenosyl-L-methionine contacts are provided by residues glycine 66, 67-68 (GT), glutamate 99, glutamine 126, arginine 138, and aspartate 162.

It belongs to the anaerobic coproporphyrinogen-III oxidase family. HemW subfamily. [4Fe-4S] cluster is required as a cofactor.

The protein localises to the cytoplasm. In terms of biological role, probably acts as a heme chaperone, transferring heme to an unknown acceptor. Binds one molecule of heme per monomer, possibly covalently. Binds 1 [4Fe-4S] cluster. The cluster is coordinated with 3 cysteines and an exchangeable S-adenosyl-L-methionine. This is Heme chaperone HemW from Buchnera aphidicola subsp. Acyrthosiphon pisum (strain APS) (Acyrthosiphon pisum symbiotic bacterium).